The sequence spans 31 residues: Cytochrome b6-f complex subunit 6 (31 aa).

A helical transmembrane segment spans residues 4–24 (ITSYFGFLLVVLTITSALFIG).

This sequence belongs to the PetL family. In terms of assembly, the 4 large subunits of the cytochrome b6-f complex are cytochrome b6, subunit IV (17 kDa polypeptide, PetD), cytochrome f and the Rieske protein, while the 4 small subunits are PetG, PetL, PetM and PetN. The complex functions as a dimer.

The protein resides in the plastid. The protein localises to the chloroplast thylakoid membrane. In terms of biological role, component of the cytochrome b6-f complex, which mediates electron transfer between photosystem II (PSII) and photosystem I (PSI), cyclic electron flow around PSI, and state transitions. PetL is important for photoautotrophic growth as well as for electron transfer efficiency and stability of the cytochrome b6-f complex. The chain is Cytochrome b6-f complex subunit 6 from Jasminum nudiflorum (Winter jasmine).